Consider the following 160-residue polypeptide: Deoxyuridine 5'-triphosphate nucleotidohydrolase (160 aa).

Residues 79-81, Asn-92, 96-98, and Lys-106 each bind substrate; these read RSG and TVD.

It belongs to the dUTPase family. Mg(2+) serves as cofactor.

It carries out the reaction dUTP + H2O = dUMP + diphosphate + H(+). The protein operates within pyrimidine metabolism; dUMP biosynthesis; dUMP from dCTP (dUTP route): step 2/2. This enzyme is involved in nucleotide metabolism: it produces dUMP, the immediate precursor of thymidine nucleotides and it decreases the intracellular concentration of dUTP so that uracil cannot be incorporated into DNA. The polypeptide is Deoxyuridine 5'-triphosphate nucleotidohydrolase (Rhizobium meliloti (strain 1021) (Ensifer meliloti)).